We begin with the raw amino-acid sequence, 318 residues long: NAC domain-containing protein 59 (318 aa).

The 151-residue stretch at 24 to 174 (LPPGFRFHPT…ECVISRVFHT (151 aa)) folds into the NAC domain. Residues 121–180 (VGMKKTLVFYKGRAPKGVKTNWVMHEYRLEGKFAIDNLSKTAKNECVISRVFHTRTDGTK) mediate DNA binding.

In terms of tissue distribution, mostly expressed in root cortex, phloem, atrichoblast and quiescent center (QC), and, to a lower extent, in root endodermis, xylem, pericycle, columella and lateral root cap (LRC). Expressed in roots, cotyledons, very young leaves, senescing leaves, mature flowers and pollen.

It is found in the nucleus. Its function is as follows. Transcription activator that binds to DNA in promoters of target genes on a specific bipartite motif 5'-[AG]CGT[AG](4-5n)[AG][CT]ACGCAA-3'. Triggers the expression of senescence-associated genes during age-, salt- and dark-induced senescence through a regulatory network that may involve cross-talk with salt- and H(2)O(2)-dependent signaling pathways. This is NAC domain-containing protein 59 from Arabidopsis thaliana (Mouse-ear cress).